Consider the following 128-residue polypeptide: Probable prefoldin subunit 6 (128 aa).

It belongs to the prefoldin subunit beta family. Heterohexamer of two PFD-alpha type and four PFD-beta type subunits.

The protein resides in the cytoplasm. Functionally, binds specifically to cytosolic chaperonin (c-CPN) and transfers target proteins to it. Binds to nascent polypeptide chain and promotes folding in an environment in which there are many competing pathways for nonnative proteins. Required for positioning of the mitotic spindle. The polypeptide is Probable prefoldin subunit 6 (Caenorhabditis briggsae).